Consider the following 749-residue polypeptide: Subtilisin-like protease SBT4.14 (749 aa).

The N-terminal stretch at 1-28 (MIRSKCSCHHHLLVLVMVVLWISPRYAS) is a signal peptide. Positions 29 to 115 (AEDEHAKDFY…VSRNQYRKLH (87 aa)) are cleaved as a propeptide — activation peptide. One can recognise an Inhibitor I9 domain in the interval 38–115 (YIIYLGDRPD…VSRNQYRKLH (78 aa)). The 477-residue stretch at 119–595 (SWDFVGLPLT…GGQINPRRAA (477 aa)) folds into the Peptidase S8 domain. Residue D145 is the Charge relay system of the active site. N-linked (GlcNAc...) asparagine glycosylation is present at N176. Catalysis depends on H210, which acts as the Charge relay system. N-linked (GlcNAc...) asparagine glycans are attached at residues N225, N233, N446, and N458. The active-site Charge relay system is S536. The N-linked (GlcNAc...) asparagine glycan is linked to N618.

This sequence belongs to the peptidase S8 family. The C-terminal propeptide is autocleaved. As to expression, expressed only in roots, particularly in xylem.

This is Subtilisin-like protease SBT4.14 from Arabidopsis thaliana (Mouse-ear cress).